The chain runs to 151 residues: UPF0178 protein GSU0171 (151 aa).

This sequence belongs to the UPF0178 family.

This chain is UPF0178 protein GSU0171, found in Geobacter sulfurreducens (strain ATCC 51573 / DSM 12127 / PCA).